A 995-amino-acid polypeptide reads, in one-letter code: KN motif and ankyrin repeat domain-containing protein 4 (995 aa).

Disordered regions lie at residues 1 to 29 (MEKT…SVET) and 68 to 127 (TLPR…EVSY). The segment covering 101-124 (LGTQEQNQSPPLGNAPQASTSRSE) has biased composition (polar residues). Residues 343 to 404 (SSLKQQVSAL…EGQFHQENAK (62 aa)) are a coiled coil. 5 disordered regions span residues 443–467 (ESWG…GNQS), 503–558 (EAGT…PTDA), 617–642 (QAHP…TSLK), 663–705 (LQFV…PDHK), and 721–740 (PEGT…VPHS). Gly residues predominate over residues 511 to 523 (GPQGGTRGAGGFL). A compositionally biased stretch (basic and acidic residues) spans 526-549 (SDRKTPPAGREETSSNLPGKEHPG). Over residues 625-640 (PASSSSPPVEISPSTS) the composition is skewed to low complexity. The span at 680–693 (TSGEDSTPEDLSDS) shows a compositional bias: acidic residues. The span at 694 to 705 (EAEKKCDGPDHK) shows a compositional bias: basic and acidic residues. 5 ANK repeats span residues 823–853 (NGNT…NVDH), 862–890 (VMIT…NVNI), 895–924 (GGQT…DVNL), 928–958 (DGSS…DSSL), and 962–992 (AGRT…QGRS).

In terms of tissue distribution, strongly expressed in colon, liver, lung, skeletal muscle and kidney.

The protein localises to the cytoplasm. Its function is as follows. May be involved in the control of cytoskeleton formation by regulating actin polymerization. The sequence is that of KN motif and ankyrin repeat domain-containing protein 4 (KANK4) from Homo sapiens (Human).